A 57-amino-acid chain; its full sequence is uncharacterized protein (57 aa).

The interval 1 to 57 is disordered; that stretch reads MPHYVVVKSPMRRRRSPRRRSPRVCYSPRRVACSPRRRSPRRRSPRRRSPRRSIVVY. Residues 10-22 show a composition bias toward basic residues; sequence PMRRRRSPRRRSP. Residues 23-34 show a composition bias toward low complexity; that stretch reads RVCYSPRRVACS. The segment covering 35–51 has biased composition (basic residues); the sequence is PRRRSPRRRSPRRRSPR.

This is an uncharacterized protein from Acheta domesticus (House cricket).